We begin with the raw amino-acid sequence, 560 residues long: Serine palmitoyltransferase 2 (560 aa).

Residues 65 to 85 traverse the membrane as a helical segment; sequence PMLVAVLTYVGYGVLTLFGYL. An N6-(pyridoxal phosphate)lysine modification is found at Lys-377.

It belongs to the class-II pyridoxal-phosphate-dependent aminotransferase family. As to quaternary structure, component of the serine palmitoyltransferase (SPT) complex, which is composed of SPTLC1, SPTLC2 or SPTLC3 and SPTSSA or SPTSSB. The heterodimer consisting of SPTLC1 and SPTLC2/SPTLC3 forms the catalytic core of the enzyme, while SPTSSA or SPTSSB subunits determine substrate specificity. SPT also interacts with ORMDL proteins, especially ORMDL3, which negatively regulate SPT activity in the presence of ceramides. Forms dimers of heterodimers with SPTLC1. It depends on pyridoxal 5'-phosphate as a cofactor.

Its subcellular location is the endoplasmic reticulum membrane. The catalysed reaction is L-serine + hexadecanoyl-CoA + H(+) = 3-oxosphinganine + CO2 + CoA. It carries out the reaction octadecanoyl-CoA + L-serine + H(+) = 3-oxoeicosasphinganine + CO2 + CoA. It participates in lipid metabolism; sphingolipid metabolism. Its activity is regulated as follows. SPT complex catalytic activity is negatively regulated by ORMDL proteins, including ORMDL3, in the presence of ceramides. This mechanism allows to maintain ceramide levels at sufficient concentrations for the production of complex sphingolipids, but which prevents the accumulation of ceramides to levels that trigger apoptosis. Component of the serine palmitoyltransferase multisubunit enzyme (SPT) that catalyzes the initial and rate-limiting step in sphingolipid biosynthesis by condensing L-serine and activated acyl-CoA (most commonly palmitoyl-CoA) to form long-chain bases. The SPT complex is composed of SPTLC1, SPTLC2 or SPTLC3 and SPTSSA or SPTSSB. Within this complex, the heterodimer consisting of SPTLC1 and SPTLC2/SPTLC3 forms the catalytic core. The composition of the serine palmitoyltransferase (SPT) complex determines the substrate preference. The SPTLC1-SPTLC2-SPTSSA complex shows a strong preference for C16-CoA substrate, while the SPTLC1-SPTLC3-SPTSSA isozyme uses both C14-CoA and C16-CoA as substrates, with a slight preference for C14-CoA. The SPTLC1-SPTLC2-SPTSSB complex shows a strong preference for C18-CoA substrate, while the SPTLC1-SPTLC3-SPTSSB isozyme displays an ability to use a broader range of acyl-CoAs, without apparent preference. Crucial for adipogenesis. This chain is Serine palmitoyltransferase 2 (SPTLC2), found in Cricetulus griseus (Chinese hamster).